Here is a 796-residue protein sequence, read N- to C-terminus: MEAGGERFLRQRQVLLLFVFLGGSLAGSESRRYSVAEEKERGFLIANLAKDLGLRVEELAARGAQVVSKGNKQHFQLSHQTGDLLLNEKLDREELCGPTEPCILHFQILLQNPLQFVTNELRIIDVNDHSPVFFENEMHLKILESTLPGTVIPLGNAEDLDVGRNSLQNYTITPNSHFHVLTRSRRDGRKYPELVLDKALDREEQPELSLTLTALDGGSPPRSGTAQINIQVLDINDNAPEFAQPLYEVAVLENTPVYSVIVTVSASDLDTGSFGTISYAFFHASEEIRKTFQLNPITGDMQLVKYLNFEAINSYEVDIEAKDGGGLSGKSTVIVQVVDVNDNPPELTLSSVNSPIPENSGETVLAVFSVSDLDSGDNGRVMCSIENNLPFFLKPSVENFYTLVSEGALDRETRSEYNITITITDLGTPRLKTKYNITVLVSDVNDNAPAFTQTSYTLFVRENNSPALHIGSVSATDRDSGTNAQVTYSLLPPQDPHLPLSSLVSINADNGHLFALRSLDYEALQAFEFRVGATDRGSPALSSEALVRVLVLDANDNSPFVLYPLQNGSAPCTELVPRAAEPGYLVTKVVAVDGDSGQNAWLSYQLLKATEPGLFGVWAHNGEVRTARLLSERDAAKHKLAVLVKDNGEPPRSATATLHVLLVDGFSQPYLPLPEAAPAQAQADLLTVYLVVALASVSSLFLFSVLLFVAVRLCRRSRAASVGRCSVPEGPFPGHLVDVSGTGTLSQSYQYEVCLTGGSGTNEFKFLKPIIPNFVAQGAERVSEANPSFRKSFEFS.

The first 26 residues, 1 to 26 (MEAGGERFLRQRQVLLLFVFLGGSLA), serve as a signal peptide directing secretion. Over 27–690 (GSESRRYSVA…AQADLLTVYL (664 aa)) the chain is Extracellular. Cadherin domains are found at residues 35-133 (VAEE…SPVF), 138-242 (MHLK…APEF), 247-347 (YEVA…PPEL), 352-451 (VNSP…APAF), and 456-561 (YTLF…SPFV). A glycan (N-linked (GlcNAc...) asparagine) is linked at N169. Residues N418 and N436 are each glycosylated (N-linked (GlcNAc...) asparagine). The N-linked (GlcNAc...) asparagine glycan is linked to N567. One can recognise a Cadherin 6 domain in the interval 568 to 671 (GSAPCTELVP…LVDGFSQPYL (104 aa)). Residues 691–711 (VVALASVSSLFLFSVLLFVAV) form a helical membrane-spanning segment. The Cytoplasmic segment spans residues 712 to 796 (RLCRRSRAAS…PSFRKSFEFS (85 aa)).

Its subcellular location is the cell membrane. In terms of biological role, potential calcium-dependent cell-adhesion protein. May be involved in the establishment and maintenance of specific neuronal connections in the brain. In Pan troglodytes (Chimpanzee), this protein is Protocadherin beta-3 (PCDHB3).